We begin with the raw amino-acid sequence, 743 residues long: Putative pre-mRNA-splicing factor ATP-dependent RNA helicase DHX32 (743 aa).

Met1 carries the post-translational modification N-acetylmethionine. The segment at 1 to 28 is disordered; it reads MEEEGLECPNSSSEKRYFPESLDSSDGD. The region spanning 72-238 is the Helicase ATP-binding domain; that stretch reads MENLLQNQIV…YGNVPVIEVK (167 aa). 85–92 provides a ligand contact to ATP; sequence GDAKCGKS. The DEAH box signature appears at 185–188; that stretch reads DDIH.

Belongs to the DEAD box helicase family. DEAH subfamily. Expressed in lymphoid tissues (at protein level). Expressed in brain, heart, skeletal muscle, colon, thymus, spleen, kidney, liver, small intestine, placenta, lung, lymphoid tissues and blood leukocytes.

It localises to the nucleus. It is found in the mitochondrion. The enzyme catalyses ATP + H2O = ADP + phosphate + H(+). In Homo sapiens (Human), this protein is Putative pre-mRNA-splicing factor ATP-dependent RNA helicase DHX32 (DHX32).